The sequence spans 130 residues: UPF0102 protein TDE_2303 (130 aa).

It belongs to the UPF0102 family.

The protein is UPF0102 protein TDE_2303 of Treponema denticola (strain ATCC 35405 / DSM 14222 / CIP 103919 / JCM 8153 / KCTC 15104).